Here is a 147-residue protein sequence, read N- to C-terminus: Large ribosomal subunit protein uL11 (147 aa).

It belongs to the universal ribosomal protein uL11 family. In terms of assembly, part of the ribosomal stalk of the 50S ribosomal subunit. Interacts with L10 and the large rRNA to form the base of the stalk. L10 forms an elongated spine to which L12 dimers bind in a sequential fashion forming a multimeric L10(L12)X complex. Post-translationally, one or more lysine residues are methylated.

In terms of biological role, forms part of the ribosomal stalk which helps the ribosome interact with GTP-bound translation factors. The protein is Large ribosomal subunit protein uL11 of Bacteroides fragilis (strain ATCC 25285 / DSM 2151 / CCUG 4856 / JCM 11019 / LMG 10263 / NCTC 9343 / Onslow / VPI 2553 / EN-2).